We begin with the raw amino-acid sequence, 252 residues long: Probable oligoribonuclease (252 aa).

Positions 81–241 constitute an Exonuclease domain; that stretch reads VWIDCEMTGL…ALSDILESIG (161 aa). The active site involves Y202.

The protein belongs to the oligoribonuclease family.

Its subcellular location is the cytoplasm. It is found in the nucleus. 3'-to-5' exoribonuclease specific for small oligoribonucleotides. This is Probable oligoribonuclease (rex2) from Schizosaccharomyces pombe (strain 972 / ATCC 24843) (Fission yeast).